Reading from the N-terminus, the 222-residue chain is Isoprenyl transferase (222 aa).

The active site involves D12. D12 is a binding site for Mg(2+). Residues G13–R16, W17, and S57–E59 each bind substrate. N60 acts as the Proton acceptor in catalysis. Substrate-binding positions include W61, R63, R171, and R177 to S179. E190 contributes to the Mg(2+) binding site.

It belongs to the UPP synthase family. Homodimer. Mg(2+) is required as a cofactor.

Its function is as follows. Catalyzes the condensation of isopentenyl diphosphate (IPP) with allylic pyrophosphates generating different type of terpenoids. The protein is Isoprenyl transferase (uppS) of Campylobacter jejuni subsp. jejuni serotype O:2 (strain ATCC 700819 / NCTC 11168).